We begin with the raw amino-acid sequence, 359 residues long: 4-dedimethylamino-4-oxo-anhydrotetracycline transaminase OxyQ (359 aa).

Residues Gly-32, Lys-92, and Asn-155 each coordinate substrate. Pyridoxal 5'-phosphate-binding positions include 91-92, Asn-155, Tyr-186, and 216-218; these read TK and SLS. Lys-219 carries the post-translational modification N6-(pyridoxal phosphate)lysine. Pyridoxal 5'-phosphate is bound at residue Arg-227. Arg-341 contacts substrate.

This sequence belongs to the class-I pyridoxal-phosphate-dependent aminotransferase family. Pyridoxal 5'-phosphate is required as a cofactor.

It functions in the pathway antibiotic biosynthesis; oxytetracycline biosynthesis. Its function is as follows. Involved in the biosynthesis of the tetracycline antibiotic, oxytetracycline. Catalyzes the conversion of 4-dedimethylamino-4-oxoanhydrotetracycline to yield 4-amino-4-de(dimethylamino)anhydrotetracycline (4-amino-ATC). This is 4-dedimethylamino-4-oxo-anhydrotetracycline transaminase OxyQ from Streptomyces rimosus.